A 297-amino-acid chain; its full sequence is uncharacterized protein (297 aa).

The tract at residues phenylalanine 136–lysine 174 is disordered. The segment covering threonine 139–asparagine 170 has biased composition (acidic residues).

It to S.pombe SpBC725.03.

This is an uncharacterized protein from Saccharomyces cerevisiae (strain ATCC 204508 / S288c) (Baker's yeast).